The chain runs to 698 residues: Na(+)/H(+) antiporter NhaS5 (698 aa).

Helical transmembrane passes span 10-30 (SNPL…PPIF), 35-55 (LPGL…GLGV), 65-85 (LFTD…IDMV), 100-120 (LTFA…GYSF), 121-141 (NASV…YPIV), 156-176 (IGAT…CISI), 184-204 (AGLV…LIGF), 222-242 (QFLF…LINV), 275-295 (LFIP…AFLV), 300-320 (LFPL…VAAI), 333-353 (GLTM…AAVA), and 370-390 (VLNT…LMTA).

It belongs to the monovalent cation:proton antiporter 2 (CPA2) transporter (TC 2.A.37) family.

It is found in the membrane. Functionally, na(+)/H(+) antiporter. The sequence is that of Na(+)/H(+) antiporter NhaS5 (nhaS5) from Synechocystis sp. (strain ATCC 27184 / PCC 6803 / Kazusa).